The chain runs to 549 residues: DNA mismatch repair protein MutL (549 aa).

Belongs to the DNA mismatch repair MutL/HexB family.

Functionally, this protein is involved in the repair of mismatches in DNA. It is required for dam-dependent methyl-directed DNA mismatch repair. May act as a 'molecular matchmaker', a protein that promotes the formation of a stable complex between two or more DNA-binding proteins in an ATP-dependent manner without itself being part of a final effector complex. In Pseudothermotoga lettingae (strain ATCC BAA-301 / DSM 14385 / NBRC 107922 / TMO) (Thermotoga lettingae), this protein is DNA mismatch repair protein MutL.